Reading from the N-terminus, the 287-residue chain is Probable endonuclease 4 (287 aa).

Histidine 69, histidine 109, glutamate 144, aspartate 178, histidine 181, histidine 215, aspartate 228, histidine 230, and glutamate 260 together coordinate Zn(2+).

It belongs to the AP endonuclease 2 family. Requires Zn(2+) as cofactor.

The enzyme catalyses Endonucleolytic cleavage to 5'-phosphooligonucleotide end-products.. In terms of biological role, endonuclease IV plays a role in DNA repair. It cleaves phosphodiester bonds at apurinic or apyrimidinic (AP) sites, generating a 3'-hydroxyl group and a 5'-terminal sugar phosphate. The protein is Probable endonuclease 4 of Thermotoga petrophila (strain ATCC BAA-488 / DSM 13995 / JCM 10881 / RKU-1).